Reading from the N-terminus, the 695-residue chain is Eukaryotic translation initiation factor 3 subunit B (695 aa).

The segment covering 1-10 has biased composition (basic and acidic residues); sequence MAKKKGDEKA. A disordered region spans residues 1–43; the sequence is MAKKKGDEKANPAPQSDNEEQNFEEEPDFDDPEDFVEIPEEEL. Residues 17 to 43 show a composition bias toward acidic residues; that stretch reads DNEEQNFEEEPDFDDPEDFVEIPEEEL. The RRM domain occupies 60–144; that stretch reads NVVVVDGCPQ…HTFLVNLFTD (85 aa). WD repeat units lie at residues 164–205, 295–335, 338–373, and 444–486; these read KVQS…PLLL, PPDE…LLDK, IKIP…TLLE, and EIKE…APTL.

The protein belongs to the eIF-3 subunit B family. In terms of assembly, component of the eukaryotic translation initiation factor 3 (eIF-3) complex.

The protein localises to the cytoplasm. Functionally, RNA-binding component of the eukaryotic translation initiation factor 3 (eIF-3) complex, which is involved in protein synthesis of a specialized repertoire of mRNAs and, together with other initiation factors, stimulates binding of mRNA and methionyl-tRNAi to the 40S ribosome. The eIF-3 complex specifically targets and initiates translation of a subset of mRNAs involved in cell proliferation. The chain is Eukaryotic translation initiation factor 3 subunit B from Bombyx mori (Silk moth).